Here is a 233-residue protein sequence, read N- to C-terminus: N-(5'-phosphoribosyl)anthranilate isomerase (233 aa).

It belongs to the TrpF family.

It catalyses the reaction N-(5-phospho-beta-D-ribosyl)anthranilate = 1-(2-carboxyphenylamino)-1-deoxy-D-ribulose 5-phosphate. It functions in the pathway amino-acid biosynthesis; L-tryptophan biosynthesis; L-tryptophan from chorismate: step 3/5. The sequence is that of N-(5'-phosphoribosyl)anthranilate isomerase from Ralstonia pickettii (strain 12J).